A 325-amino-acid chain; its full sequence is GMP reductase (325 aa).

C173 acts as the Thioimidate intermediate in catalysis. NADP(+) is bound at residue 202–225 (IIADGGIRSHGDIAKSIRFGATMV).

This sequence belongs to the IMPDH/GMPR family. GuaC type 2 subfamily.

It carries out the reaction IMP + NH4(+) + NADP(+) = GMP + NADPH + 2 H(+). Catalyzes the irreversible NADPH-dependent deamination of GMP to IMP. It functions in the conversion of nucleobase, nucleoside and nucleotide derivatives of G to A nucleotides, and in maintaining the intracellular balance of A and G nucleotides. The sequence is that of GMP reductase from Paracidovorax citrulli (strain AAC00-1) (Acidovorax citrulli).